A 413-amino-acid chain; its full sequence is Tyrosine--tRNA ligase (413 aa).

A 'HIGH' region motif is present at residues 59 to 68; it reads PTAPDIHLGH. Residues 243 to 247 carry the 'KMSKS' region motif; sequence KMSKS. K246 contributes to the ATP binding site. Residues 351 to 411 enclose the S4 RNA-binding domain; sequence LAIGQLLKQA…GKRRFARVTL (61 aa).

Belongs to the class-I aminoacyl-tRNA synthetase family. TyrS type 2 subfamily. Homodimer.

It localises to the cytoplasm. The enzyme catalyses tRNA(Tyr) + L-tyrosine + ATP = L-tyrosyl-tRNA(Tyr) + AMP + diphosphate + H(+). In terms of biological role, catalyzes the attachment of tyrosine to tRNA(Tyr) in a two-step reaction: tyrosine is first activated by ATP to form Tyr-AMP and then transferred to the acceptor end of tRNA(Tyr). The sequence is that of Tyrosine--tRNA ligase from Burkholderia thailandensis (strain ATCC 700388 / DSM 13276 / CCUG 48851 / CIP 106301 / E264).